The chain runs to 624 residues: UvrABC system protein C (624 aa).

The 80-residue stretch at 25-104 (AEPGVYFMRD…IKQHQPHFNV (80 aa)) folds into the GIY-YIG domain. The 36-residue stretch at 214 to 249 (SELIDTLTPQMEAAAENLNFEQAARIRDQINGLKTL) folds into the UVR domain.

This sequence belongs to the UvrC family. As to quaternary structure, interacts with UvrB in an incision complex.

It localises to the cytoplasm. Functionally, the UvrABC repair system catalyzes the recognition and processing of DNA lesions. UvrC both incises the 5' and 3' sides of the lesion. The N-terminal half is responsible for the 3' incision and the C-terminal half is responsible for the 5' incision. This chain is UvrABC system protein C, found in Cyanothece sp. (strain PCC 7425 / ATCC 29141).